An 87-amino-acid chain; its full sequence is Protein anon-73B1 (87 aa).

A helical transmembrane segment spans residues 25–47 (LLIRYGLYVGALFQFVCISAAVL). The tract at residues 52 to 87 (PDVNSNPETGEVTEREGEPVRTRLHKIRKLEKKKRR) is disordered. A compositionally biased stretch (basic and acidic residues) spans 63–72 (VTEREGEPVR). Residues 73 to 87 (TRLHKIRKLEKKKRR) show a composition bias toward basic residues.

The protein belongs to the UPF0239 family.

It is found in the membrane. The sequence is that of Protein anon-73B1 from Drosophila erecta (Fruit fly).